The primary structure comprises 320 residues: mRNA decay activator protein ZFP36 (320 aa).

Residues 1-15 (MDLSAIYESLMSMSH) are necessary for nuclear export. The segment at 1–93 (MDLSAIYESL…PTSPTATPTT (93 aa)) is necessary and sufficient for the association with mRNA decay enzymes and mRNA decay activation. Necessary for localization of ARE-containing mRNAs to processing bodies (PBs) stretches follow at residues 1-167 (MDLS…DLAL) and 93-320 (TSSR…SVSE). The disordered stretch occupies residues 17–50 (LSPDHGGTESSGGLWNINSSDSIPSGVTSRLTGR). Residues 27–50 (SGGLWNINSSDSIPSGVTSRLTGR) show a composition bias toward polar residues. At Ser53 the chain carries Phosphoserine; by MAPKAPK2. Position 59 is a phosphoserine (Ser59). One copy of the P-P-P-P-G repeat lies at 64 to 68 (PPPPG). The segment covering 66–85 (PPGFAPLAPRPGPELSPSPT) has biased composition (pro residues). The disordered stretch occupies residues 66–95 (PPGFAPLAPRPGPELSPSPTSPTATPTTSS). A phosphoserine mark is found at Ser81 and Ser83. A Phosphothreonine modification is found at Thr85. Residue Ser86 is modified to Phosphoserine. The segment covering 86–95 (SPTATPTTSS) has biased composition (low complexity). The segment at 88-161 (TATPTTSSRY…GSRCHFIHNP (74 aa)) is necessary for nuclear localization. The tract at residues 90–166 (TPTTSSRYKT…FIHNPTEDLA (77 aa)) is necessary for RNA-binding. 2 consecutive C3H1-type zinc fingers follow at residues 96-124 (RYKTELCRTYSESGRCRYGAKCQFAHGPG) and 134-162 (KYKTELCHKFYLQGRCPYGSRCHFIHNPT). A necessary for interaction with PABPN1 region spans residues 96-187 (RYKTELCRTY…ISFSGLPSGR (92 aa)). Positions 167–320 (LPGQPHVLRQ…PIFNRISVSE (154 aa)) are necessary for mRNA decay activation. Residue Ser179 is modified to Phosphoserine; by MAPKAPK2. The segment at 180-310 (FSGLPSGRRT…PQPPAPPRRL (131 aa)) is disordered. Ser190 carries the post-translational modification Phosphoserine. The stretch at 191–195 (PPPPG) is one P-P-P-P-G repeat. The segment covering 197–209 (SGPSLSSCSFSPS) has biased composition (low complexity). Ser211 is modified (phosphoserine). The stretch at 212–216 (PPPPG) is one P-P-P-P-G repeat. Residue Ser221 is modified to Phosphoserine; by MAPK1; in vitro. A Phosphothreonine modification is found at Thr251. Ser270 and Ser290 each carry phosphoserine. The segment covering 280–290 (SSGSSLGGSDS) has biased composition (low complexity). The segment covering 300 to 309 (PPQPPAPPRR) has biased composition (pro residues). An interaction with CNOT1 region spans residues 306-320 (PPRRLPIFNRISVSE). Residue Ser317 is modified to Phosphoserine.

Associates with cytoplasmic CCR4-NOT and PAN2-PAN3 deadenylase complexes to trigger ARE-containing mRNA deadenylation and decay processes. Part of a mRNA decay activation complex at least composed of poly(A)-specific exoribonucleases CNOT6, EXOSC2 and XRN1 and mRNA-decapping enzymes DCP1A and DCP2. Associates with the RNA exosome complex. Interacts (via phosphorylated form) with 14-3-3 proteins; these interactions promote exclusion of ZFP36 from cytoplasmic stress granules in response to arsenite treatment in a MAPKAPK2-dependent manner and does not prevent CCR4-NOT deadenylase complex recruitment or ZFP36-induced ARE-containing mRNA deadenylation and decay processes. Interacts with 14-3-3 proteins; these interactions occur in response to rapamycin in an Akt-dependent manner. Interacts with AGO2 and AGO4. Interacts (via C-terminus) with CNOT1; this interaction occurs in a RNA-independent manner and induces mRNA deadenylation. Interacts (via N-terminus) with CNOT6. Interacts with CNOT6L. Interacts (via C-terminus) with CNOT7; this interaction occurs in a RNA-independent manner, induces mRNA deadenylation and is inhibited in a phosphorylation MAPKAPK2-dependent manner. Interacts (via unphosphorylated form) with CNOT8; this interaction occurs in a RNA-independent manner and is inhibited in a phosphorylation MAPKAPK2-dependent manner. Interacts with DCP1A. Interacts (via N-terminus) with DCP2. Interacts with EDC3. Interacts (via N-terminus) with EXOSC2. Interacts with heat shock 70 kDa proteins. Interacts with KHSRP; this interaction increases upon cytokine-induced treatment. Interacts with MAP3K4; this interaction enhances the association with SH3KBP1/CIN85. Interacts with MAPKAPK2; this interaction occurs upon skeletal muscle satellite cell activation. Interacts with NCL. Interacts with NUP214; this interaction increases upon lipopolysaccharide (LPS) stimulation. Interacts with PABPC1; this interaction occurs in a RNA-dependent manner. Interacts (via hypophosphorylated form) with PABPN1 (via RRM domain and C-terminal arginine-rich region); this interaction occurs in the nucleus in a RNA-independent manner, decreases in presence of single-stranded poly(A) RNA-oligomer and in a p38 MAPK-dependent-manner and inhibits nuclear poly(A) tail synthesis. Interacts with PAN2. Interacts (via C3H1-type zinc finger domains) with PKM. Interacts (via C3H1-type zinc finger domains) with nuclear RNA poly(A) polymerase. Interacts with PPP2CA; this interaction occurs in LPS-stimulated cells and induces ZFP36 dephosphorylation, and hence may promote ARE-containing mRNAs decay. Interacts (via C-terminus) with PRR5L (via C-terminus); this interaction may accelerate ZFP36-mediated mRNA decay during stress. Interacts (via C-terminus) with SFN; this interaction occurs in a phosphorylation-dependent manner. Interacts (via extreme C-terminal region) with SH3KBP1/CIN85 (via SH3 domains); this interaction enhances MAP3K4-induced phosphorylation of ZFP36 at Ser-59 and Ser-86 and does not alter neither ZFP36 binding to ARE-containing transcripts nor TNF-alpha mRNA decay. Interacts with XRN1. Interacts (via C-terminus and Ser-179 phosphorylated form) with YWHAB; this interaction occurs in a p38/MAPKAPK2-dependent manner, increases cytoplasmic localization of ZFP36 and protects ZFP36 from Ser-179 dephosphorylation by serine/threonine phosphatase 2A, and hence may be crucial for stabilizing ARE-containing mRNAs. Interacts (via phosphorylated form) with YWHAE. Interacts (via C-terminus) with YWHAG; this interaction occurs in a phosphorylation-dependent manner. Interacts with YWHAH; this interaction occurs in a phosphorylation-dependent manner. Interacts with YWHAQ; this interaction occurs in a phosphorylation-dependent manner. Interacts with (via C-terminus) YWHAZ; this interaction occurs in a phosphorylation-dependent manner. Does not interact with SH3KBP1. Interacts (via P-P-P-P-G repeats) with GIGYF2; the interaction is direct. Post-translationally, phosphorylated. Phosphorylation at serine and/or threonine residues occurs in a p38 MAPK- and MAPKAPK2-dependent manner. Phosphorylated by MAPKAPK2 at Ser-53 and Ser-179; phosphorylation increases its stability and cytoplasmic localization, promotes binding to 14-3-3 adapter proteins and inhibits the recruitment of cytoplasmic CCR4-NOT and PAN2-PAN3 deadenylase complexes to the mRNA decay machinery, thereby inhibiting ZFP36-induced ARE-containing mRNA deadenylation and decay processes. Phosphorylation by MAPKAPK2 does not impair ARE-containing RNA-binding. Phosphorylated in a MAPKAPK2- and p38 MAPK-dependent manner upon skeletal muscle satellite cell activation; this phosphorylation inhibits ZFP36-mediated mRNA decay activity, and hence stabilizes MYOD1 mRNA. Phosphorylated by MAPK1 upon mitogen stimulation. Phosphorylated at Ser-59 and Ser-86; these phosphorylations increase in a SH3KBP1-dependent manner. Phosphorylated at serine and threonine residues in a pyruvate kinase PKM- and p38 MAPK-dependent manner. Phosphorylation at Ser-53 may participate in the PKM-mediated degradation of ZFP36 in a p38 MAPK-dependent manner. Dephosphorylated by serine/threonine phosphatase 2A at Ser-179. Ubiquitinated; pyruvate kinase (PKM)-dependent ubiquitination leads to proteasomal degradation through a p38 MAPK signaling pathway.

Its subcellular location is the nucleus. The protein localises to the cytoplasm. It is found in the cytoplasmic granule. It localises to the P-body. Functionally, zinc-finger RNA-binding protein that destabilizes numerous cytoplasmic AU-rich element (ARE)-containing mRNA transcripts by promoting their poly(A) tail removal or deadenylation, and hence provide a mechanism for attenuating protein synthesis. Acts as an 3'-untranslated region (UTR) ARE mRNA-binding adapter protein to communicate signaling events to the mRNA decay machinery. Recruits deadenylase CNOT7 (and probably the CCR4-NOT complex) via association with CNOT1, and hence promotes ARE-mediated mRNA deadenylation. Also functions by recruiting components of the cytoplasmic RNA decay machinery to the bound ARE-containing mRNAs. Self regulates by destabilizing its own mRNA. Binds to 3'-UTR ARE of numerous mRNAs. Also binds to ARE of its own mRNA. Plays a role in anti-inflammatory responses; suppresses tumor necrosis factor (TNF)-alpha production by stimulating ARE-mediated TNF-alpha mRNA decay and several other inflammatory ARE-containing mRNAs in interferon (IFN)- and/or lipopolysaccharide (LPS)-induced macrophages. Also plays a role in the regulation of dendritic cell maturation at the post-transcriptional level, and hence operates as part of a negative feedback loop to limit the inflammatory response. Promotes ARE-mediated mRNA decay of hypoxia-inducible factor HIF1A mRNA during the response of endothelial cells to hypoxia. Positively regulates early adipogenesis of preadipocytes by promoting ARE-mediated mRNA decay of immediate early genes (IEGs). Negatively regulates hematopoietic/erythroid cell differentiation by promoting ARE-mediated mRNA decay of the transcription factor STAT5B mRNA. Plays a role in maintaining skeletal muscle satellite cell quiescence by promoting ARE-mediated mRNA decay of the myogenic determination factor MYOD1 mRNA. Also associates with and regulates the expression of non-ARE-containing target mRNAs at the post-transcriptional level, such as MHC class I mRNAs. Participates in association with argonaute RISC catalytic components in the ARE-mediated mRNA decay mechanism; assists microRNA (miRNA) targeting ARE-containing mRNAs. May also play a role in the regulation of cytoplasmic mRNA decapping; enhances decapping of ARE-containing RNAs, in vitro. Involved in the delivery of target ARE-mRNAs to processing bodies (PBs). In addition to its cytosolic mRNA-decay function, affects nuclear pre-mRNA processing. Negatively regulates nuclear poly(A)-binding protein PABPN1-stimulated polyadenylation activity on ARE-containing pre-mRNA during LPS-stimulated macrophages. Also involved in the regulation of stress granule (SG) and P-body (PB) formation and fusion. Plays a role in the regulation of keratinocyte proliferation, differentiation and apoptosis. Plays a role as a tumor suppressor by inhibiting cell proliferation in breast cancer cells. The sequence is that of mRNA decay activator protein ZFP36 from Rattus norvegicus (Rat).